The chain runs to 80 residues: Exodeoxyribonuclease 7 small subunit (80 aa).

Belongs to the XseB family. Heterooligomer composed of large and small subunits.

The protein localises to the cytoplasm. The catalysed reaction is Exonucleolytic cleavage in either 5'- to 3'- or 3'- to 5'-direction to yield nucleoside 5'-phosphates.. Its function is as follows. Bidirectionally degrades single-stranded DNA into large acid-insoluble oligonucleotides, which are then degraded further into small acid-soluble oligonucleotides. In Marinomonas sp. (strain MWYL1), this protein is Exodeoxyribonuclease 7 small subunit.